The following is a 176-amino-acid chain: Interleukin-1 receptor antagonist protein (176 aa).

The first 25 residues, 1–25 (METCRCPLSYLISFLLFLSHSETAC), serve as a signal peptide directing secretion. The cysteines at positions 91 and 141 are disulfide-linked. N-linked (GlcNAc...) asparagine glycosylation is present at Asn109.

Belongs to the IL-1 family.

The protein resides in the secreted. Anti-inflammatory antagonist of interleukin-1 family of proinflammatory cytokines such as interleukin-1beta/IL1B and interleukin-1alpha/IL1A. Protects from immune dysregulation and uncontrolled systemic inflammation triggered by IL1 for a range of innate stimulatory agents such as pathogens. The sequence is that of Interleukin-1 receptor antagonist protein (IL1RN) from Canis lupus familiaris (Dog).